Reading from the N-terminus, the 412-residue chain is MKAISVLGSTGSIGTQTLQIAEEFPEQFKIVALTAGKNLDLVIKQIETHQPEVVSLADESLLSELSSRINSLTENKKIVKKPLLMAGAEGLNTAAAWGSADLVVTGIVGCAGLLPTLAAIEAGKDLALANKETLIAAGPVVIPALKKSGSRLLPADSEHSAIFQCLQGTPWADNARLSTGMPTPGFKSIQLTASGGAFRDWKAEDLVKATVEDATSHPNWSMGKKITVDSATLMNKGLEVIEAHYLFGLSYDQIEIIIHPQSIIHSMVELDDSSVLAQLGWPDMKLPILYCLSWPSRLKTPWPRLKLTQIGNLTFKEPDTKKYPCMELAYSAGKSGGTMPAVLNAANEKAVELFLEERFKFIDIPKVIEAICEKHKCDLNLNPSLSEILEIDNWAREEVLDYSEKNITKMQF.

Residues threonine 10, glycine 11, serine 12, isoleucine 13, glycine 36, lysine 37, asparagine 38, and asparagine 130 each coordinate NADPH. A 1-deoxy-D-xylulose 5-phosphate-binding site is contributed by lysine 131. Glutamate 132 lines the NADPH pocket. Aspartate 156 lines the Mn(2+) pocket. Residues serine 157, glutamate 158, serine 194, and histidine 217 each coordinate 1-deoxy-D-xylulose 5-phosphate. Mn(2+) is bound at residue glutamate 158. Glycine 223 contributes to the NADPH binding site. 1-deoxy-D-xylulose 5-phosphate is bound by residues serine 230, asparagine 235, lysine 236, and glutamate 239. Mn(2+) is bound at residue glutamate 239.

It belongs to the DXR family. The cofactor is Mg(2+). It depends on Mn(2+) as a cofactor.

It carries out the reaction 2-C-methyl-D-erythritol 4-phosphate + NADP(+) = 1-deoxy-D-xylulose 5-phosphate + NADPH + H(+). It participates in isoprenoid biosynthesis; isopentenyl diphosphate biosynthesis via DXP pathway; isopentenyl diphosphate from 1-deoxy-D-xylulose 5-phosphate: step 1/6. Functionally, catalyzes the NADPH-dependent rearrangement and reduction of 1-deoxy-D-xylulose-5-phosphate (DXP) to 2-C-methyl-D-erythritol 4-phosphate (MEP). This chain is 1-deoxy-D-xylulose 5-phosphate reductoisomerase, found in Prochlorococcus marinus (strain NATL2A).